We begin with the raw amino-acid sequence, 808 residues long: Phospholipase D alpha 1 (808 aa).

Residues 1–125 (MAKTLLHGTL…LEGEEVDKWV (125 aa)) form the C2 domain. D186 provides a ligand contact to Ca(2+). The region spanning 326–364 (TIFTHHQKIVVVDSEMPTSGSENRRVVSFVGGIDLCDGR) is the PLD phosphodiesterase 1 domain. Catalysis depends on residues H331, K333, and D338. H331 lines the a 1,2-diacyl-sn-glycero-3-phosphate pocket. Residues H370 and H404 each coordinate Ca(2+). In terms of domain architecture, PLD phosphodiesterase 2 spans 654–681 (FMIYVHAKMMIVDDEYIIIGSANINQRS). Active-site residues include H659, K661, and D666. H659 is a binding site for a 1,2-diacyl-sn-glycero-3-phosphate. A Ca(2+)-binding site is contributed by E720.

It belongs to the phospholipase D family. C2-PLD subfamily. The cofactor is Ca(2+).

It carries out the reaction a 1,2-diacyl-sn-glycero-3-phosphocholine + H2O = a 1,2-diacyl-sn-glycero-3-phosphate + choline + H(+). In terms of biological role, hydrolyzes glycerol-phospholipids at the terminal phosphodiesteric bond. Plays an important role in various cellular processes. In Spuriopimpinella brachycarpa (Chamnamul), this protein is Phospholipase D alpha 1 (PLD1).